A 341-amino-acid polypeptide reads, in one-letter code: Retinol dehydrogenase 10 (341 aa).

A helical; Signal-anchor transmembrane segment spans residues 3–23; it reads IVLEFFLVTFKVLWAFVLAAA. 40–64 serves as a coordination point for NADP(+); the sequence is LITGAGSGLGRLFALEFARRRAQLV. Serine 197 is a binding site for substrate. Residue tyrosine 210 is the Proton acceptor of the active site.

It belongs to the short-chain dehydrogenases/reductases (SDR) family.

The protein resides in the microsome membrane. Its subcellular location is the endoplasmic reticulum membrane. The enzyme catalyses all-trans-retinol + NADP(+) = all-trans-retinal + NADPH + H(+). Its pathway is cofactor metabolism; retinol metabolism. Functionally, retinol dehydrogenase with a clear preference for NADP. Converts all-trans-retinol to all-trans-retinal. Has no detectable activity towards 11-cis-retinol, 9-cis-retinol and 13-cis-retinol. In Xenopus tropicalis (Western clawed frog), this protein is Retinol dehydrogenase 10 (rdh10).